The primary structure comprises 336 residues: UDP-N-acetylenolpyruvoylglucosamine reductase (336 aa).

One can recognise an FAD-binding PCMH-type domain in the interval 1-178 (MAHSLQTLHT…TTVHLALPKE (178 aa)). Arg-154 is a catalytic residue. Ser-222 (proton donor) is an active-site residue. Glu-318 is a catalytic residue.

Belongs to the MurB family. FAD serves as cofactor.

It localises to the cytoplasm. The enzyme catalyses UDP-N-acetyl-alpha-D-muramate + NADP(+) = UDP-N-acetyl-3-O-(1-carboxyvinyl)-alpha-D-glucosamine + NADPH + H(+). The protein operates within cell wall biogenesis; peptidoglycan biosynthesis. In terms of biological role, cell wall formation. The polypeptide is UDP-N-acetylenolpyruvoylglucosamine reductase (Pseudoalteromonas translucida (strain TAC 125)).